The chain runs to 1597 residues: Mitogen-activated protein kinase kinase kinase 4 (1597 aa).

Disordered regions lie at residues Met-1–Val-128 and Ser-424–Pro-465. Residues Ser-59–Asn-69 are compositionally biased toward acidic residues. Ser-77 is subject to Phosphoserine. Residues Gln-84–Arg-94 show a composition bias toward basic residues. Position 424 is a phosphoserine (Ser-424). Thr-440 is modified (phosphothreonine). Residue Ser-449 is modified to Phosphoserine. Positions Ser-449–Pro-458 are enriched in acidic residues. The residue at position 451 (Thr-451) is a Phosphothreonine. Residues Ser-454 and Ser-492 each carry the phosphoserine modification. Disordered regions lie at residues Arg-1137–Thr-1157, Ala-1190–Glu-1220, and Phe-1233–Ser-1263. A compositionally biased stretch (polar residues) spans Ala-1210–Pro-1219. 2 positions are modified to phosphoserine: Ser-1241 and Ser-1263. Residues Ser-1241–Ala-1250 show a composition bias toward basic and acidic residues. Residues Trp-1332 to Val-1590 form the Protein kinase domain. Residues Ile-1338–Val-1346 and Lys-1361 contribute to the ATP site. The active-site Proton acceptor is Asp-1452.

Belongs to the protein kinase superfamily. STE Ser/Thr protein kinase family. MAP kinase kinase kinase subfamily. In terms of assembly, monomer and homodimer. Homodimerization enhances kinase activity. Interacts with CDC42. Interacts with TRAF4; this promotes homodimerization. Binds both upstream activators and downstream substrates in multimolecular complexes. Interacts with AXIN1 and DIXDC1; interaction with DIXDC1 prevents interaction with AXIN1. Interacts with GADD45 and MAP2K6. Interacts with ZFP36; this interaction enhances the association with SH3KBP1/CIN85. Interacts with SH3KBP1; this interaction enhances the association with ZFP36. The cofactor is Mg(2+). As to expression, widely expressed. High expression was found in skeletal muscle, kidney, testis followed by heart brain and lung. Low expression was found in spleen.

Its subcellular location is the cytoplasm. It is found in the perinuclear region. The enzyme catalyses L-seryl-[protein] + ATP = O-phospho-L-seryl-[protein] + ADP + H(+). It catalyses the reaction L-threonyl-[protein] + ATP = O-phospho-L-threonyl-[protein] + ADP + H(+). Its activity is regulated as follows. N-terminal autoinhibitory domain interacts with the C-terminal kinase domain, inhibiting kinase activity, and preventing interaction with its substrate, MAP2K6. The GADD45 proteins activate the kinase by binding to the N-terminal domain. Activated by phosphorylation on Thr-1494. Functionally, component of a protein kinase signal transduction cascade. Activates the CSBP2, P38 and JNK MAPK pathways, but not the ERK pathway. Specifically phosphorylates and activates MAP2K4 and MAP2K6. The chain is Mitogen-activated protein kinase kinase kinase 4 (Map3k4) from Mus musculus (Mouse).